We begin with the raw amino-acid sequence, 347 residues long: Probable inactive UDP-arabinopyranose mutase 2 (347 aa).

Arg145 is a glycosylation site (N-linked (Glc...) arginine).

The protein belongs to the RGP family. As to quaternary structure, heteromers with UAM1 and UAM3. In terms of processing, is not reversibly glycosylated in vitro by UDP-glucose, UDP-xylose and UDP-galactose.

The protein localises to the golgi apparatus. Functionally, probable inactive UDP-L-arabinose mutase. Inactive in vitro, but associates with UAM1 and UAM3. This Oryza sativa subsp. japonica (Rice) protein is Probable inactive UDP-arabinopyranose mutase 2.